Consider the following 317-residue polypeptide: Protein KlaC (317 aa).

Functionally, belongs to the kla operon, which is associated with cryptic tellurite resistance, and IncW plasmid fertility inhibition. This Escherichia coli protein is Protein KlaC (klaC).